Here is a 265-residue protein sequence, read N- to C-terminus: Undecaprenyl-diphosphatase 1 (265 aa).

7 consecutive transmembrane segments (helical) span residues 4–24, 42–62, 84–104, 108–128, 184–204, 217–237, and 245–265; these read IITAFILGIVEGLAEFLPISS, AKTFEIVIQLGAILAIAILYH, FHVFLGVFPAVVAGLLLHDVI, LFQPYTVVIGLVAGAILMIFA, SEFSFLIALPVMVGATGLDLL, MFAVGFITSFIVAMLAVVTFL, and LKPFAYYRILLAILFTVFVLL.

It belongs to the UppP family.

The protein resides in the cell membrane. The catalysed reaction is di-trans,octa-cis-undecaprenyl diphosphate + H2O = di-trans,octa-cis-undecaprenyl phosphate + phosphate + H(+). Catalyzes the dephosphorylation of undecaprenyl diphosphate (UPP). Confers resistance to bacitracin. This Bacillus anthracis protein is Undecaprenyl-diphosphatase 1.